Consider the following 469-residue polypeptide: Glutamine synthetase (469 aa).

One can recognise a GS beta-grasp domain in the interval N14–G99. In terms of domain architecture, GS catalytic spans P106–V469. Mg(2+)-binding residues include E131 and E133. ATP is bound at residue E209. Mg(2+) contacts are provided by E214 and E221. L-glutamate-binding positions include N265 to G266 and G266. H270 serves as a coordination point for Mg(2+). Residues H272–S274 and S274 each bind ATP. Residues R322, E328, and R340 each coordinate L-glutamate. ATP contacts are provided by R340, R345, and K353. E358 contributes to the Mg(2+) binding site. R360 contributes to the L-glutamate binding site. O-AMP-tyrosine is present on Y398.

The protein belongs to the glutamine synthetase family. Oligomer of 12 subunits arranged in the form of two hexameric ring. Requires Mg(2+) as cofactor.

The protein resides in the cytoplasm. It catalyses the reaction L-glutamate + NH4(+) + ATP = L-glutamine + ADP + phosphate + H(+). Its activity is regulated as follows. The activity of this enzyme could be controlled by adenylation under conditions of abundant glutamine. Functionally, catalyzes the ATP-dependent biosynthesis of glutamine from glutamate and ammonia. The polypeptide is Glutamine synthetase (Rhizobium meliloti (strain 1021) (Ensifer meliloti)).